Reading from the N-terminus, the 62-residue chain is Large ribosomal subunit protein eL37 (62 aa).

The Zn(2+) site is built by cysteine 20, cysteine 23, cysteine 35, and cysteine 38. A C4-type zinc finger spans residues 20–38 (CRRCGRRSYNVAKGYCAAC).

Belongs to the eukaryotic ribosomal protein eL37 family. Zn(2+) is required as a cofactor.

Binds to the 23S rRNA. The polypeptide is Large ribosomal subunit protein eL37 (rpl37e) (Aeropyrum pernix (strain ATCC 700893 / DSM 11879 / JCM 9820 / NBRC 100138 / K1)).